The sequence spans 155 residues: Ribosomal RNA large subunit methyltransferase H (155 aa).

S-adenosyl-L-methionine is bound by residues Gly104 and Leu123–Phe128.

The protein belongs to the RNA methyltransferase RlmH family. In terms of assembly, homodimer.

The protein localises to the cytoplasm. The enzyme catalyses pseudouridine(1915) in 23S rRNA + S-adenosyl-L-methionine = N(3)-methylpseudouridine(1915) in 23S rRNA + S-adenosyl-L-homocysteine + H(+). Functionally, specifically methylates the pseudouridine at position 1915 (m3Psi1915) in 23S rRNA. This is Ribosomal RNA large subunit methyltransferase H from Nitratidesulfovibrio vulgaris (strain DSM 19637 / Miyazaki F) (Desulfovibrio vulgaris).